We begin with the raw amino-acid sequence, 867 residues long: MSGNTHGLSWFPHFPDKFVSWGQEIHLYEVRRKDDHSQKSRLPYISVNYLANESRYQYARCVAASYHSDQPIIAVGLADGKVGICNFRDTYDSSWEYTPRQQRMCTCLAWNELDANILAIGHDRHRNDTCITIWDIERGVPKETANFFGVGESANSICWDRNHRTVIAGMSQKMIKLFDLRQSNATCQSIQTKTVQGLSVSPNGNYLCSYVDSVITLWDPRNIKSPLRQIQSSKNHLQIAWCPTRTSLLSSLQRDSSYITLYDIRSVDTDNSGEIYHVKRQISPFPARYQHSGKFSFVNCLSWHSRDFERALLLADALNILDFRLPATLHTAHSNRRKLPLLMQRPLYTPASPTSTAATPTQQQPTSSCSTNSGSSLDFSTPGGSPFNVDLLKPELFELDLVDETRQRALEDYGIKPDNKRFGELHLTPYLRNVWSTLNNVYSEDRLTGLKATLGINLGHTSEALMASSRIESQVLQWPEGINNSNKLICYRSEQRDLALQLCGWAFEQELDRFIDQLYANKEYSRAAMICVFHLKIFHACNILSSAADNMRDPSMYRITVIALSSFNADRCSSTWRNQRSSANMQIHDPHLRAVFSFLTMEKDNFDAVLKEEGVSLSDRMAFACKYLSETKLADYVAQQIQAAIDGGDLNGLLLTGESQDGIDILQSYMDTSFDVQTVALVAINYFRQELFEDKRIQYWIASYLDHLNSWGLWEKRAELDIKIESIRPSSRSSRTVFLSCNFCGKSVSNALLDEPRPRSTTTSTNRLSSCPSCRKPLPRCSLCLMHMGTMVNMSNGETPTTTPDVPGWQTKPFSKWFSWCQTCRHGGHTEHIMQWFKQNSECPVSSCNCRCFDMDGTKPNTLRDIS.

5 WD repeats span residues 51–86, 100–144, 149–188, 190–228, and 231–272; these read ANESRYQYARCVAASYHSDQPIIAVGLADGKVGICN, RQQR…PKET, GVGESANSICWDRNHRTVIAGMSQKMIKLFDLRQSNATCQ, IQTKTVQGLSVSPNGNYLCSYVDSVITLWDPRNIKSPLR, and QSSK…TDNS. Positions 350 to 376 are enriched in low complexity; sequence PASPTSTAATPTQQQPTSSCSTNSGSS. The tract at residues 350-378 is disordered; that stretch reads PASPTSTAATPTQQQPTSSCSTNSGSSLD. The segment at 739–777 adopts a C4-type zinc-finger fold; sequence LSCNFCGKSVSNALLDEPRPRSTTTSTNRLSSCPSCRKP. Zn(2+) contacts are provided by C741, C744, C771, C774, C784, C821, C824, H826, H829, H832, C843, C848, and C852. An RING-type; atypical zinc finger spans residues 778–857; it reads LPRCSLCLMH…CNCRCFDMDG (80 aa).

Belongs to the WD repeat mio family. As to quaternary structure, component of the GATOR complex consisting of mio, Nup44A/Seh1, Im11, Nplr3, Nplr2, Wdr24, Wdr59 and Sec13. Within the GATOR complex, probable component of the GATOR2 subcomplex which is likely composed of mio, Nup44A/Seh1, Wdr24, Wdr59 and Sec13. Interacts with Wdr24. Interacts with nucleoporin Nup44A/Seh1. The GATOR2 complex associates with unmet in the absence of S-adenosyl-L-methionine; the mio-Wdr24-Nup44A subcomplex is essential and sufficient for this interaction while Wdr59 and Sec13 are dispensable. This association acts as a nutrient sensor to inhibit mTORC1 signaling in the absence of methionine. In terms of tissue distribution, present in the oocyte.

The protein resides in the nucleus. It is found in the lysosome. Its function is as follows. An essential component of the GATOR subcomplex GATOR2 which functions as an activator of the amino acid-sensing branch of the mTORC1 signaling pathway. The two GATOR subcomplexes, GATOR1 and GATOR2, regulate the mTORC1 pathway in order to mediate metabolic homeostasis, female gametogenesis and the response to amino acid limitation and complete starvation. GATOR2 activates the mTORC1 signaling pathway through the inhibition of the GATOR1 subcomplex, controlling the switch to cell proliferation and growth under nutrient replete conditions and during female oocyte development. This component is required for activating mTORC1 specifically in germline cells to promote cell growth and maintain the oocyte fate. GATOR1 and GATOR2 act at different stages of oogenesis to regulate mTORC1 in order to control meiotic entry and promote oocyte growth and development. After exactly four mitotic cyst divisions, the GATOR1 complex members (Iml1, Nprl2 and Nprl3) down-regulate mTORC1 to slow cellular metabolism and promote the mitotic/meiotic transition. At later stages of oogenesis, the mio and Nup44A components of the GATOR2 complex inhibit GATOR1 and thus activate mTORC1 to promote meiotic progression, and drive oocyte growth and development. In addition to its role in the regulation of the mTORC1 complex, functions independently of mTORC1 to prevent the inappropriate accumulation of autolysosomes in germline tissues. The protein is GATOR2 complex protein Mio of Drosophila melanogaster (Fruit fly).